Consider the following 652-residue polypeptide: Sciellin (652 aa).

The span at 1–10 (MSNFSSRKKS) shows a compositional bias: basic residues. 2 disordered regions span residues 1 to 29 (MSNF…QQGF) and 43 to 180 (SWIK…KPLG). A compositionally biased stretch (basic and acidic residues) spans 66-95 (NSHDALDRKLIERDEPKATISRYRSEDMLD). Lys-82 is subject to N6-acetyllysine. Polar residues predominate over residues 97–110 (TLSSFRTPQSTKTP). The span at 111–130 (AVSSFNANTTATASTPATTP) shows a compositional bias: low complexity. A compositionally biased stretch (pro residues) spans 161-170 (LHPPLPPKPC). Repeat copies occupy residues 207–226 (TEDL…TDKG), 227–241 (EELD…SLNR), 242–261 (NQGL…LDKR), 262–281 (AQSL…DGKG), 282–301 (NQAF…DRRS), 302–320 (QDLR…IGRR), 321–340 (KQDL…NMKR), 341–360 (GKSL…SNKG), 361–380 (GPSL…ANQR), 381–398 (DQDL…NRSS), 399–418 (QHSL…TTAR), 419–438 (HQDL…NNQR), 439–458 (NHDV…CEQS), 459–477 (EELD…NTNG), and 478–496 (GQDL…EKNG). Positions 207–496 (TEDLDDIIRV…VNSHVAEKNG (290 aa)) are 15 X approximate tandem repeats. Ser-264 carries the post-translational modification Phosphoserine. The residue at position 343 (Ser-343) is a Phosphoserine. The disordered stretch occupies residues 353–385 (EVNRSNKGGPSLDNFTKGVPARSRANQRDQDLD). Residues 436–455 (NQRNHDVDSTIRGNPTGTRC) form a disordered region. Positions 446–455 (IRGNPTGTRC) are enriched in polar residues. One can recognise an LIM zinc-binding domain in the interval 583–649 (DMCTYCRKPL…EPCYSKVMAK (67 aa)).

In terms of tissue distribution, expressed in the upper layers of stratified epithelia, including, ependyma and choroid plexus of the brain ventricles.

The protein resides in the cytoplasm. Its subcellular location is the membrane. Its function is as follows. May function in the assembly or regulation of proteins in the cornified envelope. The LIM domain may be involved in homotypic or heterotypic associations and may function to localize sciellin to the cornified envelope. In Mus musculus (Mouse), this protein is Sciellin (Scel).